We begin with the raw amino-acid sequence, 466 residues long: Cysteine--tRNA ligase (466 aa).

Residue C28 participates in Zn(2+) binding. The 'HIGH' region motif lies at 30 to 40 (PTVYNFFHIGN). The Zn(2+) site is built by C208, H233, and E237. The short motif at 265–269 (KMSKS) is the 'KMSKS' region element. K268 serves as a coordination point for ATP.

Belongs to the class-I aminoacyl-tRNA synthetase family. Monomer. Zn(2+) is required as a cofactor.

The protein resides in the cytoplasm. It catalyses the reaction tRNA(Cys) + L-cysteine + ATP = L-cysteinyl-tRNA(Cys) + AMP + diphosphate. The protein is Cysteine--tRNA ligase of Clostridium perfringens (strain 13 / Type A).